Here is a 238-residue protein sequence, read N- to C-terminus: uncharacterized protein (238 aa).

Positions 1 to 20 (MNNVKLLIAGSAFFAMSAQA) are cleaved as a signal peptide.

The protein to E.coli GltF.

This is an uncharacterized protein from Escherichia coli (strain K12).